We begin with the raw amino-acid sequence, 378 residues long: MIMALSKTFGQKPVKFQLEEDGDYYMIGSEVGNYLRMFRGSLYKRYPSLWRRLATVEERKKIVASSHGKKYHGHTTLATSVTLLKASEVEEILDGNDEKYKAVSISTEPPTYLREQKAKRNSQWVPTLPNSSHHLDAVPCSTTINRNRMGRDKKRTFPLCFDDHDPAVIHENAAQPEVLVPIRLDMEIDGQKLRDAFTWNMNEKLMTPEMFAEILCDDLDLNPLAFVPAIASAIRQQIESYPTDSILEDQSDQRVIIKLNIHVGNISLVDQFEWDMSEKENSPEKFALKLCSELGLGGEFVTTIAYSIRGQLSWHQKTYAFSENPLPTVEIAIRNTGDADQWCPLLETLTDAEMEKKIRDQDRNTRRMRRLANTAPAW.

Residues 1–106 (MIMALSKTFG…DEKYKAVSIS (106 aa)) form a DNA-binding region.

Belongs to the SNF5 family. In terms of assembly, component of the multiprotein chromatin-remodeling complexes SWI/SNF. Component of neural progenitors-specific chromatin remodeling complex (npBAF complex) and the neuron-specific chromatin remodeling complex (nBAF complex). Component of the BAF (SWI/SNF) chromatin remodeling complex. Component of the SWI/SNF-B (PBAF) chromatin remodeling complex. Binds to double-stranded DNA.

The protein resides in the nucleus. In terms of biological role, involved in chromatin-remodeling. Core component of the BAF (SWI/SNF) complex. This ATP-dependent chromatin-remodeling complex plays important roles in cell proliferation and differentiation, in cellular antiviral activities and inhibition of tumor formation. Belongs to the neural progenitors-specific chromatin remodeling complex (npBAF complex) and the neuron-specific chromatin remodeling complex (nBAF complex) and may play a role in neural development. This Xenopus laevis (African clawed frog) protein is SWI/SNF-related matrix-associated actin-dependent regulator of chromatin subfamily B member 1 (smarcb1).